We begin with the raw amino-acid sequence, 257 residues long: Pyridoxine 5'-phosphate synthase (257 aa).

Asn6 is a 3-amino-2-oxopropyl phosphate binding site. 8–9 (DH) lines the 1-deoxy-D-xylulose 5-phosphate pocket. Arg17 lines the 3-amino-2-oxopropyl phosphate pocket. Catalysis depends on His42, which acts as the Proton acceptor. 1-deoxy-D-xylulose 5-phosphate contacts are provided by Arg44 and His49. Residue Glu69 is the Proton acceptor of the active site. Thr99 contacts 1-deoxy-D-xylulose 5-phosphate. His211 acts as the Proton donor in catalysis. 3-amino-2-oxopropyl phosphate is bound by residues Gly212 and 233–234 (GQ).

Belongs to the PNP synthase family. In terms of assembly, homooctamer; tetramer of dimers.

It is found in the cytoplasm. The catalysed reaction is 3-amino-2-oxopropyl phosphate + 1-deoxy-D-xylulose 5-phosphate = pyridoxine 5'-phosphate + phosphate + 2 H2O + H(+). It participates in cofactor biosynthesis; pyridoxine 5'-phosphate biosynthesis; pyridoxine 5'-phosphate from D-erythrose 4-phosphate: step 5/5. Catalyzes the complicated ring closure reaction between the two acyclic compounds 1-deoxy-D-xylulose-5-phosphate (DXP) and 3-amino-2-oxopropyl phosphate (1-amino-acetone-3-phosphate or AAP) to form pyridoxine 5'-phosphate (PNP) and inorganic phosphate. This is Pyridoxine 5'-phosphate synthase from Campylobacter fetus subsp. fetus (strain 82-40).